Here is a 200-residue protein sequence, read N- to C-terminus: Glutathione S-transferase 1-1 (200 aa).

One can recognise a GST N-terminal domain in the interval 1 to 73; it reads GSSPCRSVIM…YLVEKYGKTD (73 aa). Residues S2, 43-45, and 57-59 each bind glutathione; these read HTI and ESR. Positions 79-200 constitute a GST C-terminal domain; sequence CPKKRAVINQ…AGCLEFKKFF (122 aa).

Belongs to the GST superfamily. Theta family. As to quaternary structure, homodimer.

The catalysed reaction is RX + glutathione = an S-substituted glutathione + a halide anion + H(+). It carries out the reaction 1,1,1-trichloro-2,2-bis(4-chlorophenyl)ethane = 1,1-dichloro-2,2-bis(4-chlorophenyl)ethylene + chloride + H(+). Its function is as follows. Conjugation of reduced glutathione to a wide number of exogenous and endogenous hydrophobic electrophiles. Has DDT dehydrochlorinase activity. This Drosophila mauritiana (Fruit fly) protein is Glutathione S-transferase 1-1 (GstD1).